The chain runs to 122 residues: Large ribosomal subunit protein uL24 (122 aa).

The protein belongs to the universal ribosomal protein uL24 family. As to quaternary structure, part of the 50S ribosomal subunit.

Its function is as follows. One of two assembly initiator proteins, it binds directly to the 5'-end of the 23S rRNA, where it nucleates assembly of the 50S subunit. In terms of biological role, located at the polypeptide exit tunnel on the outside of the subunit. This is Large ribosomal subunit protein uL24 from Methanosarcina mazei (strain ATCC BAA-159 / DSM 3647 / Goe1 / Go1 / JCM 11833 / OCM 88) (Methanosarcina frisia).